A 430-amino-acid polypeptide reads, in one-letter code: Adenylosuccinate synthetase (430 aa).

GTP-binding positions include 13–19 (GDEGKGK) and 41–43 (GHT). Asp-14 (proton acceptor) is an active-site residue. Residues Asp-14 and Gly-41 each coordinate Mg(2+). Residues 14 to 17 (DEGK), 39 to 42 (NAGH), Thr-130, Arg-144, Gln-225, Thr-240, and Arg-304 contribute to the IMP site. The active-site Proton donor is His-42. A substrate-binding site is contributed by 300-306 (ASTGRPR). GTP-binding positions include Arg-306, 332–334 (KLD), and 414–416 (STG).

Belongs to the adenylosuccinate synthetase family. Homodimer. The cofactor is Mg(2+).

Its subcellular location is the cytoplasm. It catalyses the reaction IMP + L-aspartate + GTP = N(6)-(1,2-dicarboxyethyl)-AMP + GDP + phosphate + 2 H(+). Its pathway is purine metabolism; AMP biosynthesis via de novo pathway; AMP from IMP: step 1/2. Functionally, plays an important role in the de novo pathway of purine nucleotide biosynthesis. Catalyzes the first committed step in the biosynthesis of AMP from IMP. The chain is Adenylosuccinate synthetase from Xanthomonas axonopodis pv. citri (strain 306).